A 33-amino-acid polypeptide reads, in one-letter code: Brevinin-2LT (33 aa).

C27 and C33 are oxidised to a cystine.

In terms of tissue distribution, expressed by the skin glands.

The protein resides in the secreted. Has antibacterial activity. The chain is Brevinin-2LT from Rana latastei (Italian agile frog).